The sequence spans 465 residues: Protein dml1 (465 aa).

Serine 446 carries the post-translational modification Phosphoserine.

This sequence belongs to the misato family.

Its subcellular location is the mitochondrion. Functionally, involved in the partitioning of the mitochondrial organelle and mitochondrial DNA (mtDNA) inheritance. This Schizosaccharomyces pombe (strain 972 / ATCC 24843) (Fission yeast) protein is Protein dml1 (dml1).